A 137-amino-acid chain; its full sequence is Large ribosomal subunit protein uL16 (137 aa).

The protein belongs to the universal ribosomal protein uL16 family. As to quaternary structure, part of the 50S ribosomal subunit.

In terms of biological role, binds 23S rRNA and is also seen to make contacts with the A and possibly P site tRNAs. In Streptococcus thermophilus (strain ATCC BAA-491 / LMD-9), this protein is Large ribosomal subunit protein uL16.